The following is a 141-amino-acid chain: Ribosome-binding factor A (141 aa).

Residues 120 to 141 (DEALRAQSAGARPAGDEDPYKP) are disordered.

The protein belongs to the RbfA family. As to quaternary structure, monomer. Binds 30S ribosomal subunits, but not 50S ribosomal subunits or 70S ribosomes.

It is found in the cytoplasm. One of several proteins that assist in the late maturation steps of the functional core of the 30S ribosomal subunit. Associates with free 30S ribosomal subunits (but not with 30S subunits that are part of 70S ribosomes or polysomes). Required for efficient processing of 16S rRNA. May interact with the 5'-terminal helix region of 16S rRNA. This is Ribosome-binding factor A from Corynebacterium jeikeium (strain K411).